A 287-amino-acid polypeptide reads, in one-letter code: Histone H1 (287 aa).

A compositionally biased stretch (low complexity) spans 1 to 11 (MATEEPVIVNE). 2 disordered regions span residues 1-58 (MATE…THPP) and 120-287 (YKLP…RGRK). A compositionally biased stretch (basic residues) spans 33 to 51 (GKAKKETKAKKPAAPRKRS). Residues 55 to 124 (THPPYFEMIK…KVKNSYKLPS (70 aa)) enclose the H15 domain. Residues 135–202 (AKKKPAAAKS…KAKPVAKAKP (68 aa)) are compositionally biased toward basic residues. Low complexity predominate over residues 203 to 248 (KAAAAAKPKAAVKPKAAPAKTKAAVKPNLKAKTTTAKVAKTATRTT). Residues 276-287 (PAKKATPKRGRK) show a composition bias toward basic residues.

This sequence belongs to the histone H1/H5 family.

The protein localises to the nucleus. It localises to the chromosome. Histones H1 are necessary for the condensation of nucleosome chains into higher-order structures. In Solanum lycopersicum (Tomato), this protein is Histone H1.